Consider the following 280-residue polypeptide: MGAWASRGRAARVPAPEPESEPEEALDLSQLPPELLLVVLSHVPPRTLLGRCRQVCRGWRALVDGQALWLLILARDHSATGRALLHLARSCQSPARNARPCPLGRFCARRPIGRNPCGQGLRKWMVQHGGDGWVVEENRTTVPGAPSQTCFVTSFSWCRKKQVLDLEEEGLWPELLDSGRIEICVSDWWGARHDSGCMYRLLVQLLDANQTVLDKFSAVPDPIPQWNNNACLHVTHVFSNIKMGVRFVSFEHWGQDTQFWAGHYGARVTNSSVIVRVHLS.

The interval 1–26 is disordered; that stretch reads MGAWASRGRAARVPAPEPESEPEEAL. Positions 25-72 constitute an F-box domain; sequence ALDLSQLPPELLLVVLSHVPPRTLLGRCRQVCRGWRALVDGQALWLLI. The FBA domain occupies 100–277; it reads PCPLGRFCAR…VTNSSVIVRV (178 aa).

As to quaternary structure, part of a SCF (SKP1-cullin-F-box) protein ligase complex. Interacts with SKP1 and CUL1.

Its function is as follows. Substrate-recognition component of the SCF (SKP1-CUL1-F-box protein)-type E3 ubiquitin ligase complex. Able to recognize and bind complex-type oligosaccharides. The chain is F-box only protein 27 (FBXO27) from Macaca fascicularis (Crab-eating macaque).